The sequence spans 62 residues: Small ribosomal subunit protein eS30z/eS30y/eS30x (62 aa).

The disordered stretch occupies residues 1-38; that stretch reads MGKVHGSLARAGKVRGQTPKVAKQDKKKKPRGRAHKRL. A compositionally biased stretch (basic residues) spans 25 to 38; sequence DKKKKPRGRAHKRL.

This sequence belongs to the eukaryotic ribosomal protein eS30 family.

The chain is Small ribosomal subunit protein eS30z/eS30y/eS30x (RPS30A) from Arabidopsis thaliana (Mouse-ear cress).